The chain runs to 297 residues: ATP synthase gamma chain (297 aa).

The protein belongs to the ATPase gamma chain family. F-type ATPases have 2 components, CF(1) - the catalytic core - and CF(0) - the membrane proton channel. CF(1) has five subunits: alpha(3), beta(3), gamma(1), delta(1), epsilon(1). CF(0) has three main subunits: a, b and c.

It is found in the cell membrane. Its function is as follows. Produces ATP from ADP in the presence of a proton gradient across the membrane. The gamma chain is believed to be important in regulating ATPase activity and the flow of protons through the CF(0) complex. The sequence is that of ATP synthase gamma chain from Micrococcus luteus (strain ATCC 4698 / DSM 20030 / JCM 1464 / CCM 169 / CCUG 5858 / IAM 1056 / NBRC 3333 / NCIMB 9278 / NCTC 2665 / VKM Ac-2230) (Micrococcus lysodeikticus).